A 304-amino-acid polypeptide reads, in one-letter code: Caspase-6 (304 aa).

Positions 1-29 (MSGAERRPAAGRVQLDSKPTPTTTADGNQ) are disordered. Residues 1 to 35 (MSGAERRPAAGRVQLDSKPTPTTTADGNQNITEVD) constitute a propeptide that is removed on maturation. The span at 17-29 (SKPTPTTTADGNQ) shows a compositional bias: polar residues. The tract at residues 54 to 56 (QRR) is tri-arginine exosite. Histidine 133 is an active-site residue. The interval 137 to 154 (DHVYAYDAQIKIETITNM) is 130's region. Residue cysteine 175 is part of the active site. A propeptide spanning residues 192 to 204 (SKDETTVNQTEVD) is cleaved from the precursor.

It belongs to the peptidase C14A family. In terms of assembly, heterotetramer that consists of two anti-parallel arranged heterodimers, each one formed by a 18 kDa (p18) and a 11 kDa (p11) subunit. As to quaternary structure, heterotetramer that consists of two anti-parallel arranged heterodimers, each one formed by a 18 kDa (Caspase-6 subunit p18) and a 11 kDa (Caspase-6 subunit p11) subunit. Widely expressed.

It localises to the cytoplasm. The protein localises to the nucleus. The enzyme catalyses Strict requirement for Asp at position P1 and has a preferred cleavage sequence of Val-Glu-His-Asp-|-.. During activation, the N-terminal prodomain is removed by cleavage. Concomitantly, double cleavage gives rise to a large 18-kDa and a small 11-kDa subunit. The two large and two small subunits then assemble to form the active CASP6 complex. Intramolecular cleavage at Asp-191 is a prerequisite for CASP6 self-activation. In terms of biological role, cysteine protease that plays essential roles in programmed cell death, development and innate immunity. Acts as a non-canonical executioner caspase during apoptosis: localizes in the nucleus and cleaves the nuclear structural protein lamin-A/LMNA thereby inducing nuclear shrinkage and fragmentation. Lamin-A/LMNA cleavage is required for chromatin condensation and nuclear disassembly during apoptotic execution. Plays an essential role in defense against viruses by acting as a central mediator of the ZBP1-mediated pyroptosis, apoptosis, and necroptosis (PANoptosis), independently of its cysteine protease activity. PANoptosis is a unique inflammatory programmed cell death, which provides a molecular scaffold that allows the interactions and activation of machinery required for inflammasome/pyroptosis, apoptosis and necroptosis. In Gallus gallus (Chicken), this protein is Caspase-6.